A 676-amino-acid chain; its full sequence is Urocanate hydratase (676 aa).

Residues 15-35 (PLPENRGRQAGVPHAPVRTPS) are disordered. NAD(+) is bound by residues 126–127 (GG), glutamine 204, 251–253 (GMS), glutamate 271, 317–318 (NV), 343–347 (QTSCH), 354–355 (YY), tyrosine 403, and glycine 594.

This sequence belongs to the urocanase family. NAD(+) serves as cofactor.

The enzyme catalyses 4-imidazolone-5-propanoate = trans-urocanate + H2O. The protein operates within amino-acid degradation; L-histidine degradation into L-glutamate; N-formimidoyl-L-glutamate from L-histidine: step 2/3. The chain is Urocanate hydratase (UROC1) from Homo sapiens (Human).